A 1292-amino-acid chain; its full sequence is Calcium-transporting ATPase 2 (1292 aa).

Residues 1–105 (MPTYNDDDDS…EQASSKSSTS (105 aa)) form a disordered region. Over 1-236 (MPTYNDDDDS…RLMLEAFKDK (236 aa)) the chain is Cytoplasmic. Over residues 23-41 (KPSSSQFLGVPSSNYNQRE) the composition is skewed to polar residues. The span at 44 to 60 (SRSGSSTISREPSSSGT) shows a compositional bias: low complexity. Over residues 68–78 (DSMKESYDKNK) the composition is skewed to basic and acidic residues. Residues 237 to 257 (VLILLSIAAVVSLALGLYQTF) traverse the membrane as a helical segment. Topologically, residues 258–273 (GQPPTLDPITGKPEPR) are vacuolar. A helical membrane pass occupies residues 274–294 (VEWVEGVAIMAAIVIVVTVGG). At 295 to 448 (VNDWQKELQF…QLRLSRVADA (154 aa)) the chain is on the cytoplasmic side. A helical transmembrane segment spans residues 449–469 (IAKLGGAASALLFIVLLIEFL). Residues 470–488 (VRLKSNDSSSKNKGQEFLQ) lie on the Vacuolar side of the membrane. The helical transmembrane segment at 489–509 (ILIVSVTLLVVAVPEGLPLAV) threads the bilayer. The Ca(2+) site is built by Val-498 and Glu-503. Residues 510 to 938 (TLALAFATNR…GRTVNDAVKK (429 aa)) are Cytoplasmic-facing. The active-site 4-aspartylphosphate intermediate is Asp-545. The Mg(2+) site is built by Asp-545 and Thr-547. ATP is bound by residues Thr-547, Glu-638, Lys-691, Arg-736, 807–809 (TGD), Arg-856, and Lys-862. Asp-881 serves as a coordination point for Mg(2+). An ATP-binding site is contributed by Asn-884. Residues 939-959 (FLQFQITVNITAVFLTIISAV) traverse the membrane as a helical segment. Asn-947 serves as a coordination point for Ca(2+). The Vacuolar segment spans residues 960-966 (ASTDQSS). Residues 967–987 (VLTAVQLLWVNLIMDTLAALA) form a helical membrane-spanning segment. The Ca(2+) site is built by Asn-977 and Asp-981. The Cytoplasmic portion of the chain corresponds to 988–1016 (LATDPPTPEVLKRKPEKPGASLFTFDMWK). A helical transmembrane segment spans residues 1017–1037 (MIICQSMYQLAVTLVLHFAGN). Residues 1038–1084 (SIFHYPSNTADMNTIVFNTFVWLQLFNEINNRRLDNKLNIFERINHN) are Vacuolar-facing. The chain crosses the membrane as a helical span at residues 1085-1105 (FLFIAIFVIVAGIQVIIVFFG). The Cytoplasmic portion of the chain corresponds to 1106 to 1115 (GAAFSVKRID). Residues 1116–1136 (GKGWAISIVFGVISIPLGALI) form a helical membrane-spanning segment. At 1137-1292 (RCVPNNFLRK…ALDKKSSNVH (156 aa)) the chain is on the vacuolar side.

Belongs to the cation transport ATPase (P-type) (TC 3.A.3) family.

It localises to the vacuole membrane. The catalysed reaction is Ca(2+)(in) + ATP + H2O = Ca(2+)(out) + ADP + phosphate + H(+). Its function is as follows. This magnesium-dependent enzyme catalyzes the hydrolysis of ATP coupled with the transport of calcium. Transports the calcium to the vacuole and participates in the control of the cytosolic free calcium. The sequence is that of Calcium-transporting ATPase 2 (pmc1) from Schizosaccharomyces pombe (strain 972 / ATCC 24843) (Fission yeast).